The sequence spans 314 residues: Protoheme IX farnesyltransferase 2 (314 aa).

The next 9 helical transmembrane spans lie at 32–49 (VMSL…AAPV), 54–76 (LLAV…LNMW), 98–118 (IQPH…VMTL), 120–140 (VLVN…YAVV), 153–173 (IVIG…AVTG), 180–200 (IVLF…LALF), 226–246 (IFAY…LGYT), 249–269 (FYGV…WKVL), and 285–305 (FAYS…DSVV).

It belongs to the UbiA prenyltransferase family. Protoheme IX farnesyltransferase subfamily.

It localises to the cell inner membrane. It catalyses the reaction heme b + (2E,6E)-farnesyl diphosphate + H2O = Fe(II)-heme o + diphosphate. The protein operates within porphyrin-containing compound metabolism; heme O biosynthesis; heme O from protoheme: step 1/1. Converts heme B (protoheme IX) to heme O by substitution of the vinyl group on carbon 2 of heme B porphyrin ring with a hydroxyethyl farnesyl side group. This is Protoheme IX farnesyltransferase 2 from Mesorhizobium japonicum (strain LMG 29417 / CECT 9101 / MAFF 303099) (Mesorhizobium loti (strain MAFF 303099)).